The chain runs to 403 residues: Deubiquitinase and deneddylase Dub1 (403 aa).

Residues Met1–Thr11 are compositionally biased toward polar residues. The interval Met1 to Leu24 is disordered. The helical transmembrane segment at Thr40 to Phe60 threads the bilayer. The segment at Lys77–Pro132 is disordered. Composition is skewed to pro residues over residues Val86–Thr105 and Pro114–Pro130. Catalysis depends on residues His277, Asp294, and Cys347.

It belongs to the peptidase C48 family.

The protein resides in the secreted. The protein localises to the host cell. It localises to the membrane. Functionally, effector proteins function to alter host cell physiology and promote bacterial survival in host tissues. This protease possesses deubiquitinating and deneddylating activities. The sequence is that of Deubiquitinase and deneddylase Dub1 (cdu1) from Chlamydia trachomatis serovar L2b (strain UCH-1/proctitis).